A 226-amino-acid chain; its full sequence is ATP synthase F(0) complex subunit a (226 aa).

6 helical membrane passes run 6–26 (FASF…IVLF), 68–88 (WALM…LGLL), 97–117 (QLSM…ITGF), 138–158 (IPML…ALAV), 164–184 (ITAG…LMSI), and 189–209 (ALIT…VAMI).

It belongs to the ATPase A chain family. As to quaternary structure, component of the ATP synthase complex composed at least of ATP5F1A/subunit alpha, ATP5F1B/subunit beta, ATP5MC1/subunit c (homooctomer), MT-ATP6/subunit a, MT-ATP8/subunit 8, ATP5ME/subunit e, ATP5MF/subunit f, ATP5MG/subunit g, ATP5MK/subunit k, ATP5MJ/subunit j, ATP5F1C/subunit gamma, ATP5F1D/subunit delta, ATP5F1E/subunit epsilon, ATP5PF/subunit F6, ATP5PB/subunit b, ATP5PD/subunit d, ATP5PO/subunit OSCP. ATP synthase complex consists of a soluble F(1) head domain (subunits alpha(3) and beta(3)) - the catalytic core - and a membrane F(0) domain - the membrane proton channel (subunits c, a, 8, e, f, g, k and j). These two domains are linked by a central stalk (subunits gamma, delta, and epsilon) rotating inside the F1 region and a stationary peripheral stalk (subunits F6, b, d, and OSCP). Interacts with DNAJC30; interaction is direct.

The protein resides in the mitochondrion inner membrane. It catalyses the reaction H(+)(in) = H(+)(out). Functionally, subunit a, of the mitochondrial membrane ATP synthase complex (F(1)F(0) ATP synthase or Complex V) that produces ATP from ADP in the presence of a proton gradient across the membrane which is generated by electron transport complexes of the respiratory chain. ATP synthase complex consist of a soluble F(1) head domain - the catalytic core - and a membrane F(1) domain - the membrane proton channel. These two domains are linked by a central stalk rotating inside the F(1) region and a stationary peripheral stalk. During catalysis, ATP synthesis in the catalytic domain of F(1) is coupled via a rotary mechanism of the central stalk subunits to proton translocation. With the subunit c (ATP5MC1), forms the proton-conducting channel in the F(0) domain, that contains two crucial half-channels (inlet and outlet) that facilitate proton movement from the mitochondrial intermembrane space (IMS) into the matrix. Protons are taken up via the inlet half-channel and released through the outlet half-channel, following a Grotthuss mechanism. The sequence is that of ATP synthase F(0) complex subunit a from Ovis aries (Sheep).